Consider the following 373-residue polypeptide: Core trichothecene cluster (CTC) protein 14 (373 aa).

Belongs to the TRI14 family.

Its function is as follows. Part of the core gene cluster that mediates the biosynthesis of trichothecenes, a very large family of chemically related bicyclic sesquiterpene compounds acting as mycotoxins, including T2-toxin. The biosynthesis of trichothecenes begins with the cyclization of farnesyl diphosphate to trichodiene and is catalyzed by the trichodiene synthase TRI5. Trichodiene undergoes a series of oxygenations catalyzed by the cytochrome P450 monooxygenase TRI4. TRI4 controls the addition of four oxygens at C-2, C-3, C-11, and the C-12, C-13-epoxide to form the intermediate isotrichotriol. Isotrichotriol then undergoes a non-enzymatic isomerization and cyclization to form isotrichodermol. During this process, the oxygen at the C-2 position becomes the pyran ring oxygen and the hydroxyl group at C-11 is lost. More complex type A trichothecenes are built by modifying isotrichodermol through a series of paired hydroxylation and acetylation or acylation steps. Isotrichodermol is converted to isotrichodermin by the acetyltransferase TRI101. TRI101 encodes a C-3 transacetylase that acts as a self-protection or resistance factor during biosynthesis and that the presence of a free C-3 hydroxyl group is a key component of Fusarium trichothecene phytotoxicity. A second hydroxyl group is added to C-15 by the trichothecene C-15 hydroxylase TRI11, producing 15-decalonectrin, which is then acetylated by TRI3, producing calonectrin. A third hydroxyl group is added at C-4 by the cytochrome P450 monooxygenase TRI13, converting calonectrin to 3,15-diacetoxyspirpenol, which is subsequently acetylated bythe acetyltransferase TRI7. A fourth hydroxyl group is added to C-8 by the cytochrome P450 monooxygenase TRI1, followed by the addition of an isovaleryl moiety by TRI16. Finally, the acetyl group is removed from the C-3 position by the trichothecene C-3 esterase TRI8 to produce T-2 toxin. The chain is Core trichothecene cluster (CTC) protein 14 from Fusarium sporotrichioides.